A 483-amino-acid polypeptide reads, in one-letter code: Cobyric acid synthase (483 aa).

The GATase cobBQ-type domain maps to 248–435 (VLKVVVPVLP…LHGLFETAAA (188 aa)). The active-site Nucleophile is Cys329. His427 is an active-site residue.

This sequence belongs to the CobB/CobQ family. CobQ subfamily.

It functions in the pathway cofactor biosynthesis; adenosylcobalamin biosynthesis. Its function is as follows. Catalyzes amidations at positions B, D, E, and G on adenosylcobyrinic A,C-diamide. NH(2) groups are provided by glutamine, and one molecule of ATP is hydrogenolyzed for each amidation. This is Cobyric acid synthase from Pseudomonas fluorescens (strain SBW25).